Here is a 431-residue protein sequence, read N- to C-terminus: Enolase (431 aa).

Glutamine 163 serves as a coordination point for (2R)-2-phosphoglycerate. Residue glutamate 205 is the Proton donor of the active site. Mg(2+) is bound by residues aspartate 242, glutamate 288, and aspartate 315. Residues lysine 340, arginine 369, serine 370, and lysine 391 each coordinate (2R)-2-phosphoglycerate. The active-site Proton acceptor is lysine 340.

The protein belongs to the enolase family. The cofactor is Mg(2+).

Its subcellular location is the cytoplasm. It is found in the secreted. The protein resides in the cell surface. The enzyme catalyses (2R)-2-phosphoglycerate = phosphoenolpyruvate + H2O. The protein operates within carbohydrate degradation; glycolysis; pyruvate from D-glyceraldehyde 3-phosphate: step 4/5. Functionally, catalyzes the reversible conversion of 2-phosphoglycerate (2-PG) into phosphoenolpyruvate (PEP). It is essential for the degradation of carbohydrates via glycolysis. This is Enolase from Bacillus cereus (strain AH187).